Reading from the N-terminus, the 251-residue chain is Ubiquinone/menaquinone biosynthesis C-methyltransferase UbiE (251 aa).

S-adenosyl-L-methionine-binding positions include Thr-74, Asp-95, and 123–124 (NA).

Belongs to the class I-like SAM-binding methyltransferase superfamily. MenG/UbiE family.

The catalysed reaction is a 2-demethylmenaquinol + S-adenosyl-L-methionine = a menaquinol + S-adenosyl-L-homocysteine + H(+). The enzyme catalyses a 2-methoxy-6-(all-trans-polyprenyl)benzene-1,4-diol + S-adenosyl-L-methionine = a 5-methoxy-2-methyl-3-(all-trans-polyprenyl)benzene-1,4-diol + S-adenosyl-L-homocysteine + H(+). It functions in the pathway quinol/quinone metabolism; menaquinone biosynthesis; menaquinol from 1,4-dihydroxy-2-naphthoate: step 2/2. Its pathway is cofactor biosynthesis; ubiquinone biosynthesis. In terms of biological role, methyltransferase required for the conversion of demethylmenaquinol (DMKH2) to menaquinol (MKH2) and the conversion of 2-polyprenyl-6-methoxy-1,4-benzoquinol (DDMQH2) to 2-polyprenyl-3-methyl-6-methoxy-1,4-benzoquinol (DMQH2). The chain is Ubiquinone/menaquinone biosynthesis C-methyltransferase UbiE from Shewanella sp. (strain ANA-3).